Here is a 43-residue protein sequence, read N- to C-terminus: Myotoxin-1 (43 aa).

Disulfide bonds link C4–C36, C11–C30, and C18–C37.

This sequence belongs to the crotamine-myotoxin family. As to quaternary structure, monomer. Expressed by the venom gland.

The protein resides in the secreted. Its function is as follows. Cationic peptide that possesses multiple functions. It acts as a cell-penetrating peptide (CPP), and as a potent voltage-gated potassium channel (Kv) inhibitor. It exhibits antimicrobial activities, hind limb paralysis, and severe muscle necrosis by a non-enzymatic mechanism. This is Myotoxin-1 from Crotalus concolor (Midget faded rattlesnake).